Here is a 330-residue protein sequence, read N- to C-terminus: Ferredoxin--NADP reductase (330 aa).

FAD is bound by residues E35, Q43, Y48, V90, F123, D285, and T326.

This sequence belongs to the ferredoxin--NADP reductase type 2 family. Homodimer. It depends on FAD as a cofactor.

It carries out the reaction 2 reduced [2Fe-2S]-[ferredoxin] + NADP(+) + H(+) = 2 oxidized [2Fe-2S]-[ferredoxin] + NADPH. This is Ferredoxin--NADP reductase from Streptococcus equi subsp. zooepidemicus (strain MGCS10565).